A 473-amino-acid chain; its full sequence is Ribosomal RNA small subunit methyltransferase F (473 aa).

Residues 124–130 (ASAPGSK), E148, D175, and D193 contribute to the S-adenosyl-L-methionine site. The Nucleophile role is filled by C246.

The protein belongs to the class I-like SAM-binding methyltransferase superfamily. RsmB/NOP family.

The protein localises to the cytoplasm. The enzyme catalyses cytidine(1407) in 16S rRNA + S-adenosyl-L-methionine = 5-methylcytidine(1407) in 16S rRNA + S-adenosyl-L-homocysteine + H(+). Its function is as follows. Specifically methylates the cytosine at position 1407 (m5C1407) of 16S rRNA. The sequence is that of Ribosomal RNA small subunit methyltransferase F from Aliivibrio fischeri (strain MJ11) (Vibrio fischeri).